The sequence spans 278 residues: Splicing factor YJU2 (278 aa).

Zn(2+)-binding residues include C51, C54, C88, and C91. Residues 228–278 (HRQRTNKPGNNNDEKRTPLFNPTSTKGKIQKKSSVRTNPLGIVIKRGKSLK) form a disordered region. 2 consecutive short sequence motifs (nuclear localization signal) follow at residues 242 to 258 (KRTP…KIQK) and 260 to 278 (SSVR…KSLK).

The protein belongs to the CWC16 family. YJU2 subfamily. Component of the spliceosome. Present in the activated B complex, the catalytically activated B* complex which catalyzes the branching, the catalytic step 1 C complex catalyzing the exon ligation, and the postcatalytic P complex containing the ligated exons (mRNA) and the excised lariat intron. Interacts (via C-terminus) with CLF1. Interacts (via N-terminus) with SYF1. Interacts with U2 snRNA; this interaction is direct. Identified in the CWC complex (or CEF1-associated complex), a spliceosome sub-complex reminiscent of a late-stage spliceosome composed of the U2, U5 and U6 snRNAs and at least BUD13, BUD31, BRR2, CDC40, CEF1, CLF1, CUS1, CWC2, CWC15, CWC21, CWC22, CWC23, CWC24, CWC25, CWC27, ECM2, HSH155, IST3, ISY1, LEA1, MSL1, NTC20, PRP8, PRP9, PRP11, PRP19, PRP21, PRP22, PRP45, PRP46, SLU7, SMB1, SMD1, SMD2, SMD3, SMX2, SMX3, SNT309, SNU114, SPP2, SYF1, SYF2, RSE1 and YJU2.

Its subcellular location is the nucleus. In terms of biological role, part of the spliceosome which catalyzes two sequential transesterification reactions, first the excision of the non-coding intron from pre-mRNA and then the ligation of the coding exons to form the mature mRNA. Plays a role (via N-terminus) in stabilizing the structure of the spliceosome catalytic core and docking of the branch helix into the active site, producing 5'-exon and lariat intron-3'-intermediates. Further stabilizes spliceosome conformation for 3'-splice site docking (via C-terminus) promoting exon ligation. This chain is Splicing factor YJU2, found in Saccharomyces cerevisiae (strain ATCC 204508 / S288c) (Baker's yeast).